Reading from the N-terminus, the 349-residue chain is uncharacterized protein (349 aa).

Residues 51–160 enclose the THUMP domain; sequence NIIKENKNNL…QDESYISIFQ (110 aa).

This is an uncharacterized protein from Methanocaldococcus jannaschii (strain ATCC 43067 / DSM 2661 / JAL-1 / JCM 10045 / NBRC 100440) (Methanococcus jannaschii).